A 187-amino-acid polypeptide reads, in one-letter code: ATP synthase subunit delta, chloroplastic (187 aa).

This sequence belongs to the ATPase delta chain family. As to quaternary structure, F-type ATPases have 2 components, F(1) - the catalytic core - and F(0) - the membrane proton channel. F(1) has five subunits: alpha(3), beta(3), gamma(1), delta(1), epsilon(1). CF(0) has four main subunits: a(1), b(1), b'(1) and c(10-14). The alpha and beta chains form an alternating ring which encloses part of the gamma chain. F(1) is attached to F(0) by a central stalk formed by the gamma and epsilon chains, while a peripheral stalk is formed by the delta, b and b' chains.

It localises to the plastid. It is found in the chloroplast thylakoid membrane. Its function is as follows. F(1)F(0) ATP synthase produces ATP from ADP in the presence of a proton or sodium gradient. F-type ATPases consist of two structural domains, F(1) containing the extramembraneous catalytic core and F(0) containing the membrane proton channel, linked together by a central stalk and a peripheral stalk. During catalysis, ATP synthesis in the catalytic domain of F(1) is coupled via a rotary mechanism of the central stalk subunits to proton translocation. Functionally, this protein is part of the stalk that links CF(0) to CF(1). It either transmits conformational changes from CF(0) to CF(1) or is implicated in proton conduction. The polypeptide is ATP synthase subunit delta, chloroplastic (Trieres chinensis (Marine centric diatom)).